Consider the following 314-residue polypeptide: Lipoyl synthase (314 aa).

Positions 40, 45, 51, 67, 71, 74, and 280 each coordinate [4Fe-4S] cluster. The region spanning 53 to 269 is the Radical SAM core domain; the sequence is SERKTATFMI…KNIALEKGFS (217 aa).

It belongs to the radical SAM superfamily. Lipoyl synthase family. The cofactor is [4Fe-4S] cluster.

The protein resides in the cytoplasm. It carries out the reaction [[Fe-S] cluster scaffold protein carrying a second [4Fe-4S](2+) cluster] + N(6)-octanoyl-L-lysyl-[protein] + 2 oxidized [2Fe-2S]-[ferredoxin] + 2 S-adenosyl-L-methionine + 4 H(+) = [[Fe-S] cluster scaffold protein] + N(6)-[(R)-dihydrolipoyl]-L-lysyl-[protein] + 4 Fe(3+) + 2 hydrogen sulfide + 2 5'-deoxyadenosine + 2 L-methionine + 2 reduced [2Fe-2S]-[ferredoxin]. The protein operates within protein modification; protein lipoylation via endogenous pathway; protein N(6)-(lipoyl)lysine from octanoyl-[acyl-carrier-protein]. Its function is as follows. Catalyzes the radical-mediated insertion of two sulfur atoms into the C-6 and C-8 positions of the octanoyl moiety bound to the lipoyl domains of lipoate-dependent enzymes, thereby converting the octanoylated domains into lipoylated derivatives. This Oceanobacillus iheyensis (strain DSM 14371 / CIP 107618 / JCM 11309 / KCTC 3954 / HTE831) protein is Lipoyl synthase.